A 330-amino-acid polypeptide reads, in one-letter code: Autoinducer 2 import system permease protein LsrD (330 aa).

At 1–4 (MRIR) the chain is on the cytoplasmic side. A helical membrane pass occupies residues 5-25 (YGWELALAALLVIEIVSFGAI). Residues 26 to 42 (NPRMLDLNMLLFSTSDF) lie on the Periplasmic side of the membrane. A helical transmembrane segment spans residues 43–63 (ICIGIVALPLTMVIVSGGIDI). The Cytoplasmic segment spans residues 64 to 67 (SFGS). A run of 2 helical transmembrane segments spans residues 68–88 (TIGLCAIALGVLFQSGVPMPL) and 89–109 (AILLTLLLGALCGLINAGLII). Over 110–115 (YTKVNP) the chain is Cytoplasmic. Residues 116 to 136 (LVITLGTLYLFAGSALLLSGM) form a helical membrane-spanning segment. The Periplasmic segment spans residues 137–159 (AGATGYEGIGGFPMAFTDFANLD). Residues 160-180 (VLGLPVPLIIFLICLLVFWLW) traverse the membrane as a helical segment. Residues 181-209 (LHKTHAGRNVFLIGQSPRVALYSAIPVNR) lie on the Cytoplasmic side of the membrane. A helical membrane pass occupies residues 210–230 (TLCALYAMTGLASAVAAVLLV). Residues 231–237 (SYFGSAR) lie on the Periplasmic side of the membrane. 2 helical membrane passes run 238–258 (SDLGASFLMPAITAVVLGGAN) and 259–279 (IYGGSGAIIGTAIAVLLVGYL). The Periplasmic portion of the chain corresponds to 280–285 (QQGLQM). The helical transmembrane segment at 286-306 (AGVPNQVSSALSGALLIVVVV) threads the bilayer. The Cytoplasmic segment spans residues 307 to 330 (GRSVSLHRQQIKEWLARRANNPLP).

The protein belongs to the binding-protein-dependent transport system permease family. AraH/RbsC subfamily. The complex is composed of two ATP-binding proteins (LsrA), two transmembrane proteins (LsrC and LsrD) and a solute-binding protein (LsrB).

It is found in the cell inner membrane. Functionally, part of the ABC transporter complex LsrABCD involved in autoinducer 2 (AI-2) import. Probably responsible for the translocation of the substrate across the membrane. The protein is Autoinducer 2 import system permease protein LsrD (lsrD) of Escherichia coli O157:H7.